Reading from the N-terminus, the 294-residue chain is 33 kDa chaperonin (294 aa).

2 disulfide bridges follow: cysteine 239–cysteine 241 and cysteine 272–cysteine 275.

The protein belongs to the HSP33 family. Post-translationally, under oxidizing conditions two disulfide bonds are formed involving the reactive cysteines. Under reducing conditions zinc is bound to the reactive cysteines and the protein is inactive.

The protein resides in the cytoplasm. In terms of biological role, redox regulated molecular chaperone. Protects both thermally unfolding and oxidatively damaged proteins from irreversible aggregation. Plays an important role in the bacterial defense system toward oxidative stress. The sequence is that of 33 kDa chaperonin from Listeria monocytogenes serotype 4b (strain CLIP80459).